We begin with the raw amino-acid sequence, 476 residues long: Bifunctional protein HldE (476 aa).

Residues 1–318 form a ribokinase region; the sequence is MKVTLPDFRR…ENAIRGRAET (318 aa). Residue 195-198 participates in ATP binding; that stretch reads NLSE. Asp264 is an active-site residue. A cytidylyltransferase region spans residues 344–476; the sequence is MTNGIFDILH…IIQSIKNGRG (133 aa).

The protein in the N-terminal section; belongs to the carbohydrate kinase PfkB family. This sequence in the C-terminal section; belongs to the cytidylyltransferase family. In terms of assembly, homodimer.

The catalysed reaction is D-glycero-beta-D-manno-heptose 7-phosphate + ATP = D-glycero-beta-D-manno-heptose 1,7-bisphosphate + ADP + H(+). The enzyme catalyses D-glycero-beta-D-manno-heptose 1-phosphate + ATP + H(+) = ADP-D-glycero-beta-D-manno-heptose + diphosphate. It participates in nucleotide-sugar biosynthesis; ADP-L-glycero-beta-D-manno-heptose biosynthesis; ADP-L-glycero-beta-D-manno-heptose from D-glycero-beta-D-manno-heptose 7-phosphate: step 1/4. It functions in the pathway nucleotide-sugar biosynthesis; ADP-L-glycero-beta-D-manno-heptose biosynthesis; ADP-L-glycero-beta-D-manno-heptose from D-glycero-beta-D-manno-heptose 7-phosphate: step 3/4. In terms of biological role, catalyzes the phosphorylation of D-glycero-D-manno-heptose 7-phosphate at the C-1 position to selectively form D-glycero-beta-D-manno-heptose-1,7-bisphosphate. Functionally, catalyzes the ADP transfer from ATP to D-glycero-beta-D-manno-heptose 1-phosphate, yielding ADP-D-glycero-beta-D-manno-heptose. In Yersinia pseudotuberculosis serotype O:1b (strain IP 31758), this protein is Bifunctional protein HldE.